Here is a 643-residue protein sequence, read N- to C-terminus: MNINPSIIILTINISIIITLLSSVFFFQNETNPSNLNSSSYSLGIFHNTSFNYLFSNSLFFTSLLKTLAILSLFPLFIEIIFNIPDTTVSLFNWLPNNGFSLNVEFRFDLKFNTFLSVALIVSWSILEFSYYYMDNDPNPNNFFRLLIIFLLNMIILTSTNNIFLLFIGWEGVGFLSFLLISWWTSRANANNSAIQAVIYNRVGDIGILLFFSLSITLFNTWSLPEIFSISAPNTFNNLLLVGLLIAAAGKSAQFGLHPWLPAAMEGPTPVFSIRHSSTMVVAGIFLLIRLSPLYACSSNFNTWCLILGSITAIFAATTAISQHDIKKIVAYSTTSQLGLMMVAIGLNQPSIALFHICTHAFFKAMLFLSSGSIIHSLNDEQDIRKMGGLHFILPNTAACIILGSLALSGIPFLPGFYSKDLILEIGLTNFSNFMGIVLSLLATLLTSVYSFRIIFFCFIKNPSFSPLAPINEENNNLTNSLNRLALGTILSGWILTNLTVLVPIITISSVLKTAALLLTITGVLFSISILQELTLNISPPTAYNTNSFTTNQWFYENISHILFLFYSFTISLSLSTRNIDRGWSENIGAQGIAITSSNASQSYQLSQTGYIKQYLLFSFLTLLIIIALSLTTISQLSPSFDI.

Helical transmembrane passes span 7–27 (IIIL…VFFF), 64–84 (LLKT…IFNI), 114–134 (TFLS…YYYM), 140–160 (PNNF…LTST), 163–183 (IFLL…LISW), 208–228 (ILLF…PEIF), 230–250 (ISAP…AAAG), 277–297 (SSTM…LYAC), 301–321 (FNTW…TTAI), 338–358 (LGLM…FHIC), 398–418 (AACI…PGFY), 437–457 (IVLS…IIFF), 486–506 (ALGT…VPII), 511–531 (VLKT…ISIL), 555–575 (FYEN…SLSL), and 615–635 (YLLF…TTIS).

The protein belongs to the complex I subunit 5 family.

The protein localises to the mitochondrion inner membrane. The catalysed reaction is a ubiquinone + NADH + 5 H(+)(in) = a ubiquinol + NAD(+) + 4 H(+)(out). Its function is as follows. Core subunit of the mitochondrial membrane respiratory chain NADH dehydrogenase (Complex I) that is believed to belong to the minimal assembly required for catalysis. Complex I functions in the transfer of electrons from NADH to the respiratory chain. The immediate electron acceptor for the enzyme is believed to be ubiquinone. The chain is NADH-ubiquinone oxidoreductase chain 5 (ND5) from Patiria pectinifera (Starfish).